Reading from the N-terminus, the 401-residue chain is Transcription factor atf-2 (401 aa).

Residues 19 to 38 are compositionally biased toward low complexity; sequence SASAEFSSSSSDSSNFSEGS. The disordered stretch occupies residues 19 to 78; the sequence is SASAEFSSSSSDSSNFSEGSPPESRRNSVNESVIKDEHYWERRRRNNDASRRSREKRRQN. The span at 41–78 shows a compositional bias: basic and acidic residues; sequence ESRRNSVNESVIKDEHYWERRRRNNDASRRSREKRRQN. Positions 54–100 constitute a bZIP 1 domain; sequence DEHYWERRRRNNDASRRSREKRRQNDLAMEEKIMLLSAENERLKSQL. The segment at 60–85 is basic motif 1; the sequence is RRRRNNDASRRSREKRRQNDLAMEEK. The interval 89–96 is leucine-zipper 1; sequence LSAENERL. Positions 181 to 211 are enriched in low complexity; it reads SASSLFSSSSSSAFHPFRPSESAQQSFPSSS. 2 disordered regions span residues 181–256 and 273–345; these read SASS…PQPV and QRRP…AAKR. Polar residues-rich tracts occupy residues 222–256 and 273–283; these read DSSTDVNMPQPQLQPGSSVIQQIGQPAPSGTPQPV and QRRPSPTVPQS. A compositionally biased stretch (low complexity) spans 305-317; sequence ESVSSSASFSPSH. A bZIP 2 domain is found at 329–392; sequence SPQYVDRRRR…AHFKSVLAQR (64 aa). Positions 335 to 360 are basic motif 2; that stretch reads RRRRNNEAAKRCRANRRAVFEYRSRR. Residues 361–388 adopt a coiled-coil conformation; sequence VQLLEGENEDLRTQIETLKAEIAHFKSV. A leucine-zipper 2 region spans residues 364–378; that stretch reads LEGENEDLRTQIETL.

It belongs to the bZIP family. In terms of assembly, interacts with cell death specification protein ces-2. Post-translationally, phosphorylated by mitogen-activated protein kinases pmk-2 and pmk-3. May be responsive to osmotic stress.

It localises to the nucleus. Functionally, acts as a transcription factor that recognizes and binds to the sequence 5'-[GA]TTA[CT]GTAA[CT]-3', a sequence present in many promoters. Involved in the development of the excretory duct cell, by positively modulating embryonic transcription of putative transcription factor lin-48, acting in concert with cell death specification protein ces-2. Negatively modulates expression of key autophagy-related genes, bec-1/ATG6 and lgg-1/ATG8, and may link together autophagy and apoptosis during development. Positively modulates expression of neuropeptide pigment dispersing factor homologs pdf-1 and pdf-2. This is Transcription factor atf-2 from Caenorhabditis elegans.